Reading from the N-terminus, the 273-residue chain is Nitrogenase iron protein 4 (273 aa).

An ATP-binding site is contributed by 8–15 (GKGGIGKS). Residue Cys-94 participates in [4Fe-4S] cluster binding. Arg-97 carries the post-translational modification ADP-ribosylarginine; by dinitrogenase reductase ADP-ribosyltransferase. Cys-129 is a [4Fe-4S] cluster binding site.

The protein belongs to the NifH/BchL/ChlL family. As to quaternary structure, homodimer. [4Fe-4S] cluster is required as a cofactor. In terms of processing, the reversible ADP-ribosylation of Arg-97 inactivates the nitrogenase reductase and regulates nitrogenase activity.

The catalysed reaction is N2 + 8 reduced [2Fe-2S]-[ferredoxin] + 16 ATP + 16 H2O = H2 + 8 oxidized [2Fe-2S]-[ferredoxin] + 2 NH4(+) + 16 ADP + 16 phosphate + 6 H(+). The key enzymatic reactions in nitrogen fixation are catalyzed by the nitrogenase complex, which has 2 components: the iron protein and the molybdenum-iron protein. This chain is Nitrogenase iron protein 4 (nifH4), found in Clostridium pasteurianum.